The chain runs to 70 residues: Small integral membrane protein 42 (70 aa).

Residues 26-46 traverse the membrane as a helical segment; it reads LVNVLFFFTPLMTLVTLLILV.

The protein localises to the membrane. In Homo sapiens (Human), this protein is Small integral membrane protein 42.